We begin with the raw amino-acid sequence, 815 residues long: Subtilisin-like protease SBT2.5 (815 aa).

Positions 1 to 19 (MDIGLRIFVVFVLLVAVTA) are cleaved as a signal peptide. One can recognise an Inhibitor I9 domain in the interval 21-124 (VYIVTMEGDP…RSVDKDWKVR (104 aa)). In terms of domain architecture, Peptidase S8 spans 120–671 (DWKVRRLTTH…SGHVNPSAAL (552 aa)). Catalysis depends on charge relay system residues aspartate 160 and histidine 234. The region spanning 397–501 (TLVSANDVLL…VSKSMDLIDY (105 aa)) is the PA domain. N-linked (GlcNAc...) asparagine glycosylation is found at asparagine 503 and asparagine 577. The Charge relay system role is filled by serine 596. N-linked (GlcNAc...) asparagine glycosylation occurs at asparagine 701.

Belongs to the peptidase S8 family. Expressed in roots, leaves and flowers of mature plants.

This is Subtilisin-like protease SBT2.5 from Arabidopsis thaliana (Mouse-ear cress).